A 261-amino-acid polypeptide reads, in one-letter code: tRNA threonylcarbamoyladenosine dehydratase (261 aa).

A helical transmembrane segment spans residues Cys230–Ser250.

The protein belongs to the HesA/MoeB/ThiF family.

Its subcellular location is the membrane. Its function is as follows. Catalyzes the ATP-dependent dehydration of threonylcarbamoyladenosine at position 37 (t(6)A37) to form cyclic t(6)A37 (ct(6)A37) in tRNAs that read codons beginning with adenine. The polypeptide is tRNA threonylcarbamoyladenosine dehydratase (tcdA) (Haemophilus influenzae (strain ATCC 51907 / DSM 11121 / KW20 / Rd)).